The chain runs to 770 residues: Penicillin-binding protein 1C (770 aa).

The Cytoplasmic portion of the chain corresponds to 1-8 (MPRLLTKR). The chain crosses the membrane as a helical; Signal-anchor for type II membrane protein span at residues 9–29 (GCWITLAAAPFLLFLAAWGAD). At 30-770 (KLWPLPLHEV…QIATVKFVMQ (741 aa)) the chain is on the periplasmic side. The tract at residues 43 to 213 (RVVVAQDGTP…SRLRPDRWPE (171 aa)) is transglycosylase. The active-site Proton donor; for transglycosylase activity is glutamate 84. Residues 278-559 (AGLQRRLEEL…FASAVPLLNQ (282 aa)) form a transpeptidase region. The active-site Acyl-ester intermediate; for transpeptidase activity is the serine 342.

This sequence in the N-terminal section; belongs to the glycosyltransferase 51 family. The protein in the C-terminal section; belongs to the transpeptidase family.

It is found in the cell inner membrane. The enzyme catalyses [GlcNAc-(1-&gt;4)-Mur2Ac(oyl-L-Ala-gamma-D-Glu-L-Lys-D-Ala-D-Ala)](n)-di-trans,octa-cis-undecaprenyl diphosphate + beta-D-GlcNAc-(1-&gt;4)-Mur2Ac(oyl-L-Ala-gamma-D-Glu-L-Lys-D-Ala-D-Ala)-di-trans,octa-cis-undecaprenyl diphosphate = [GlcNAc-(1-&gt;4)-Mur2Ac(oyl-L-Ala-gamma-D-Glu-L-Lys-D-Ala-D-Ala)](n+1)-di-trans,octa-cis-undecaprenyl diphosphate + di-trans,octa-cis-undecaprenyl diphosphate + H(+). Its pathway is cell wall biogenesis; peptidoglycan biosynthesis. Its activity is regulated as follows. Transglycosylase activity can be inhibited by moenomycin. In terms of biological role, cell wall formation. The enzyme has a penicillin-insensitive transglycosylase N-terminal domain (formation of linear glycan strands) and a transpeptidase C-terminal domain which may not be functional. The chain is Penicillin-binding protein 1C (pbpC) from Escherichia coli (strain K12).